The following is a 657-amino-acid chain: Autophagy-related protein 22 (657 aa).

Over residues 1–15 the composition is skewed to low complexity; it reads MAPNLQPQPQSQLQR. Residues 1–78 form a disordered region; the sequence is MAPNLQPQPQ…VVPRHFGHDA (78 aa). Topologically, residues 1–91 are cytoplasmic; the sequence is MAPNLQPQPQ…SRRELLGWYA (91 aa). Residues 26–40 are compositionally biased toward polar residues; it reads GLSNISKRSFRSCAT. A helical membrane pass occupies residues 92-112; that stretch reads YAFAAETYVICGIASFIPILL. The Vacuolar portion of the chain corresponds to 113 to 155; that stretch reads ETLARENGVLVSDRKTPCGSSDSKNDGDGQCIVWVFGMEINTA. The helical transmembrane segment at 156–176 threads the bilayer; sequence SFAMYTFSVSVLVQALLVVSI. Residues 177-187 lie on the Cytoplasmic side of the membrane; sequence SCAADHGNYRK. A helical membrane pass occupies residues 188 to 208; that stretch reads KLLLTFAWIGSFAVMSYIFIT. The Vacuolar segment spans residues 209 to 212; that stretch reads KDNY. Residues 213 to 233 form a helical membrane-spanning segment; the sequence is ILGALLTVISNTSFGASFVLL. The Cytoplasmic segment spans residues 234–317; it reads NSFLPLLVRY…ELELSTRISA (84 aa). Residues 318 to 338 form a helical membrane-spanning segment; that stretch reads IGIGTGYIAALFLQCICIGVL. At 339 to 349 the chain is on the vacuolar side; that stretch reads ISLHNTTWGQR. Residue Asn343 is glycosylated (N-linked (GlcNAc...) asparagine). A helical membrane pass occupies residues 350–370; it reads VVLFMVGVWWTVFTIPAAMWL. The Cytoplasmic portion of the chain corresponds to 371-384; the sequence is RPRPGPPLADNGRK. Residues 385–405 traverse the membrane as a helical segment; sequence GIMAGLAYILYAWKSLFKTIQ. The Vacuolar portion of the chain corresponds to 406 to 409; it reads QARR. A helical membrane pass occupies residues 410-430; that stretch reads LLDIVLFLAGWFLLSDAIATT. Residues 431 to 446 lie on the Cytoplasmic side of the membrane; the sequence is SSTAILFAKTQLHMKP. A helical membrane pass occupies residues 447-467; it reads WALGMINVISTTAGVFGAFGW. The Vacuolar segment spans residues 468–481; sequence SWVSRLFNLKAHQT. Residues 482–502 traverse the membrane as a helical segment; it reads ILVCIALFELIPLYGLLGYLP. Residues 503 to 515 are Cytoplasmic-facing; it reads FVKNWGVFGLQQP. The chain crosses the membrane as a helical span at residues 516-536; that stretch reads WEMYPLAAVYGVVLGGLSGYC. Over 537-554 the chain is Vacuolar; the sequence is RSLYGELIPPGSEAAFYA. A helical transmembrane segment spans residues 555–575; the sequence is LYAITDKGSSVFGPTIVGAII. Over 576 to 583 the chain is Cytoplasmic; that stretch reads DRTGTIRP. The helical transmembrane segment at 584-604 threads the bilayer; sequence AFWFLAVLVGFPAPLIWFIDV. Topologically, residues 605-657 are vacuolar; that stretch reads ERGRREGAKLAKSITDSIVQEEDESDDGAERRGMLSDYEREHGQSIDDERAGR. The tract at residues 615 to 657 is disordered; that stretch reads AKSITDSIVQEEDESDDGAERRGMLSDYEREHGQSIDDERAGR. The segment covering 632-657 has biased composition (basic and acidic residues); that stretch reads GAERRGMLSDYEREHGQSIDDERAGR.

It belongs to the ATG22 family.

It is found in the vacuole membrane. In terms of biological role, vacuolar effluxer which mediate the efflux of leucine and other amino acids resulting from autophagic degradation. The release of autophagic amino acids allows the maintenance of protein synthesis and viability during nitrogen starvation. Autophagy is required for proper vegetative growth, asexual/sexual reproduction, and full virulence. Autophagy is particularly involved in the biosynthesis of deoxynivalenol (DON), an important virulence determinant. The polypeptide is Autophagy-related protein 22 (Gibberella zeae (strain ATCC MYA-4620 / CBS 123657 / FGSC 9075 / NRRL 31084 / PH-1) (Wheat head blight fungus)).